The chain runs to 161 residues: Large ribosomal subunit protein bL17 (161 aa).

Residues 126 to 161 (TAAKKAPKTRRSRKKATASVAEAPTAEAASEEKAAE) are disordered. The span at 130–141 (KAPKTRRSRKKA) shows a compositional bias: basic residues. Residues 142–153 (TASVAEAPTAEA) are compositionally biased toward low complexity.

Belongs to the bacterial ribosomal protein bL17 family. In terms of assembly, part of the 50S ribosomal subunit. Contacts protein L32.

This chain is Large ribosomal subunit protein bL17, found in Parabacteroides distasonis (strain ATCC 8503 / DSM 20701 / CIP 104284 / JCM 5825 / NCTC 11152).